The primary structure comprises 274 residues: Sulfur carrier protein FdhD (274 aa).

The active-site Cysteine persulfide intermediate is the Cys121. Residue Phe258–Arg263 participates in Mo-bis(molybdopterin guanine dinucleotide) binding.

Belongs to the FdhD family.

The protein localises to the cytoplasm. Functionally, required for formate dehydrogenase (FDH) activity. Acts as a sulfur carrier protein that transfers sulfur from IscS to the molybdenum cofactor prior to its insertion into FDH. This is Sulfur carrier protein FdhD from Yersinia pestis bv. Antiqua (strain Antiqua).